A 589-amino-acid polypeptide reads, in one-letter code: Kelch-like protein 25 (589 aa).

The 69-residue stretch at 46–114 folds into the BTB domain; that stretch reads TDMTLWAGNR…AYSSKIIINE (69 aa). Positions 149 to 250 constitute a BACK domain; that stretch reads CLGMMILSDA…LPSELLKEAV (102 aa). 6 Kelch repeats span residues 296–340, 341–388, 389–444, 446–492, 494–538, and 539–585; these read TLLI…AIGC, KVYI…ELDN, CLYV…SAKL, LFVF…VLGS, IFIM…ASGN, and KVYV…STWK.

In terms of assembly, component of the BCR(KLHL25) E3 ubiquitin ligase complex, at least composed of cul3, klhl25 and rbx1.

Its pathway is protein modification; protein ubiquitination. Substrate-specific adapter of a BCR (BTB-CUL3-RBX1) E3 ubiquitin ligase complex involved in various processes, such as translation homeostasis and lipid synthesis. The BCR(KLHL25) ubiquitin ligase complex acts by mediating ubiquitination of hypophosphorylated eif4ebp1 (4E-BP1): ubiquitination and subsequent degradation of hypophosphorylated EIF4EBP1 (4E-BP1) probably serves as a homeostatic mechanism to maintain translation and prevent eIF4E inhibition when eIF4E levels are low. The BCR(KLHL25) complex also acts as a regulator of lipid synthesis by mediating ubiquitination and degradation of ACLY, thereby inhibiting lipid synthesis. The protein is Kelch-like protein 25 of Xenopus laevis (African clawed frog).